Consider the following 64-residue polypeptide: Transcription factor P13 (64 aa).

Transcription factor that regulates expression of phage structural components with protein P14. The protein is Transcription factor P13 of Pseudoalteromonas phage PM2 (Bacteriophage PM2).